A 463-amino-acid chain; its full sequence is Peptidylprolyl isomerase cyp7 (463 aa).

The region spanning 11–166 (ATGTVILKTT…FPPKIISTEV (156 aa)) is the PPIase cyclophilin-type domain. The segment at 224-275 (VKKPLRQKTPVSRSSDTTTELSKDLISSSSSIHSTYSSAQTGLTSAKVSSDE) is disordered. Residues 232–243 (TPVSRSSDTTTE) are compositionally biased toward polar residues. Positions 250–261 (SSSSSIHSTYSS) are enriched in low complexity. Over residues 262-271 (AQTGLTSAKV) the composition is skewed to polar residues.

This sequence belongs to the cyclophilin-type PPIase family. CWC27 subfamily. As to quaternary structure, belongs to the 40S cdc5-associated complex (or cwf complex), a spliceosome sub-complex reminiscent of a late-stage spliceosome composed of the U2, U5 and U6 snRNAs and at least brr2, cdc5, cwf2/prp3, cwf3/syf1, cwf4/syf3, cwf5/ecm2, spp42/cwf6, cwf7/spf27, cwf8, cwf9, cwf10, cwf11, cwf12, prp45/cwf13, cwf14, cwf15, cwf16, cwf17, cwf18, cwf19, cwf20, cwf21, cwf22, cwf23, cwf24, cwf25, cwf26, cyp7/cwf27, cwf28, cwf29/ist3, lea1, msl1, prp5/cwf1, prp10, prp12/sap130, prp17, prp22, sap61, sap62, sap114, sap145, slu7, smb1, smd1, smd3, smf1, smg1 and syf2.

Its subcellular location is the cytoplasm. The protein localises to the nucleus. It catalyses the reaction [protein]-peptidylproline (omega=180) = [protein]-peptidylproline (omega=0). Functionally, PPIases accelerate the folding of proteins. Catalyzes the cis-trans isomerization of proline imidic peptide bonds in oligopeptides. Involved in pre-mRNA splicing. This chain is Peptidylprolyl isomerase cyp7 (cyp7), found in Schizosaccharomyces pombe (strain 972 / ATCC 24843) (Fission yeast).